The following is a 240-amino-acid chain: tRNA pseudouridine synthase B (240 aa).

The Nucleophile role is filled by aspartate 48.

It belongs to the pseudouridine synthase TruB family. Type 1 subfamily.

The catalysed reaction is uridine(55) in tRNA = pseudouridine(55) in tRNA. In terms of biological role, responsible for synthesis of pseudouridine from uracil-55 in the psi GC loop of transfer RNAs. The sequence is that of tRNA pseudouridine synthase B from Bacteroides thetaiotaomicron (strain ATCC 29148 / DSM 2079 / JCM 5827 / CCUG 10774 / NCTC 10582 / VPI-5482 / E50).